A 631-amino-acid chain; its full sequence is Phosphomethylpyrimidine synthase (631 aa).

Residues asparagine 239, methionine 268, tyrosine 297, histidine 333, 353 to 355 (SRG), 394 to 397 (DGLR), and glutamate 433 contribute to the substrate site. Residue histidine 437 coordinates Zn(2+). Position 460 (tyrosine 460) interacts with substrate. Histidine 501 is a binding site for Zn(2+). Cysteine 581, cysteine 584, and cysteine 589 together coordinate [4Fe-4S] cluster.

It belongs to the ThiC family. Homodimer. Requires [4Fe-4S] cluster as cofactor.

The catalysed reaction is 5-amino-1-(5-phospho-beta-D-ribosyl)imidazole + S-adenosyl-L-methionine = 4-amino-2-methyl-5-(phosphooxymethyl)pyrimidine + CO + 5'-deoxyadenosine + formate + L-methionine + 3 H(+). It functions in the pathway cofactor biosynthesis; thiamine diphosphate biosynthesis. Catalyzes the synthesis of the hydroxymethylpyrimidine phosphate (HMP-P) moiety of thiamine from aminoimidazole ribotide (AIR) in a radical S-adenosyl-L-methionine (SAM)-dependent reaction. The sequence is that of Phosphomethylpyrimidine synthase from Shigella boydii serotype 4 (strain Sb227).